A 126-amino-acid polypeptide reads, in one-letter code: Aspartate 1-decarboxylase (126 aa).

Serine 25 serves as the catalytic Schiff-base intermediate with substrate; via pyruvic acid. A Pyruvic acid (Ser) modification is found at serine 25. Residue threonine 57 coordinates substrate. The active-site Proton donor is the tyrosine 58. Position 73 to 75 (73 to 75 (GAA)) interacts with substrate.

This sequence belongs to the PanD family. In terms of assembly, heterooctamer of four alpha and four beta subunits. It depends on pyruvate as a cofactor. In terms of processing, is synthesized initially as an inactive proenzyme, which is activated by self-cleavage at a specific serine bond to produce a beta-subunit with a hydroxyl group at its C-terminus and an alpha-subunit with a pyruvoyl group at its N-terminus.

The protein localises to the cytoplasm. The catalysed reaction is L-aspartate + H(+) = beta-alanine + CO2. The protein operates within cofactor biosynthesis; (R)-pantothenate biosynthesis; beta-alanine from L-aspartate: step 1/1. Functionally, catalyzes the pyruvoyl-dependent decarboxylation of aspartate to produce beta-alanine. The sequence is that of Aspartate 1-decarboxylase from Nitrosococcus oceani (strain ATCC 19707 / BCRC 17464 / JCM 30415 / NCIMB 11848 / C-107).